Here is a 357-residue protein sequence, read N- to C-terminus: Histidinol-phosphate aminotransferase 1 (357 aa).

Lys-217 bears the N6-(pyridoxal phosphate)lysine mark.

This sequence belongs to the class-II pyridoxal-phosphate-dependent aminotransferase family. Histidinol-phosphate aminotransferase subfamily. Homodimer. Pyridoxal 5'-phosphate serves as cofactor.

The catalysed reaction is L-histidinol phosphate + 2-oxoglutarate = 3-(imidazol-4-yl)-2-oxopropyl phosphate + L-glutamate. The protein operates within amino-acid biosynthesis; L-histidine biosynthesis; L-histidine from 5-phospho-alpha-D-ribose 1-diphosphate: step 7/9. This Burkholderia lata (strain ATCC 17760 / DSM 23089 / LMG 22485 / NCIMB 9086 / R18194 / 383) protein is Histidinol-phosphate aminotransferase 1.